A 538-amino-acid polypeptide reads, in one-letter code: Sterol esterase 2 (538 aa).

At 1–11 the chain is on the cytoplasmic side; it reads MVNKVVDEVQR. A helical; Signal-anchor for type II membrane protein transmembrane segment spans residues 12-32; that stretch reads LVSAIILTSFMTGLFILSLWK. Residues 33–538 are Lumenal-facing; sequence NYVTVHFQHK…IENLRFPNAR (506 aa). Positions 42-87 are disordered; that stretch reads KNDPRDTRSSRTKIQPNDKKKKRPARHSRPLSISSTTPLDLQRDQE. Residues 60-70 are compositionally biased toward basic residues; the sequence is KKKKRPARHSR. Phosphoserine occurs at positions 73 and 107. Residue serine 287 is the Nucleophile of the active site. Active-site charge relay system residues include aspartate 480 and histidine 511.

This sequence belongs to the AB hydrolase superfamily. Post-translationally, not glycosylated.

It localises to the cell membrane. It catalyses the reaction a sterol ester + H2O = a sterol + a fatty acid + H(+). Functionally, mediates the hydrolysis of steryl esters. Required for mobilization of steryl ester, thereby playing a central role in lipid metabolism. The chain is Sterol esterase 2 (YEH2) from Saccharomyces cerevisiae (strain ATCC 204508 / S288c) (Baker's yeast).